The sequence spans 509 residues: Dihydrolipoyl dehydrogenase, mitochondrial (509 aa).

The transit peptide at 1–35 (MQSWSRVYCSLAKRGHFNRISHGLQGLSAVPLRTY) directs the protein to the mitochondrion. N6-acetyllysine; alternate is present on lysine 66. Lysine 66 carries the post-translational modification N6-succinyllysine; alternate. Residues 71 to 80 (EKNETLGGTC) and lysine 89 each bind FAD. Cysteines 80 and 85 form a disulfide. N6-acetyllysine; alternate occurs at positions 104, 122, 132, and 143. N6-succinyllysine; alternate occurs at positions 104, 122, 132, and 143. An FAD-binding site is contributed by glycine 154. Lysine 159 and lysine 166 each carry N6-succinyllysine. FAD is bound at residue 183-185 (TGS). NAD(+)-binding positions include 220 to 227 (GAGVIGVE) and glutamate 243. Lysine 273 and lysine 277 each carry N6-succinyllysine. Residue valine 278 coordinates NAD(+). Serine 285 and serine 297 each carry phosphoserine. Residue glycine 314 coordinates NAD(+). Lysine 346 carries the N6-acetyllysine modification. FAD-binding positions include aspartate 355 and 361-364 (MLAH). An N6-acetyllysine; alternate modification is found at lysine 410. Lysine 410 is modified (N6-succinyllysine; alternate). An N6-acetyllysine mark is found at lysine 417 and lysine 420. Lysine 430 is subject to N6-succinyllysine. The active-site Proton acceptor is histidine 487. Phosphoserine is present on serine 502. The residue at position 505 (lysine 505) is an N6-acetyllysine; alternate. Position 505 is an N6-succinyllysine; alternate (lysine 505).

Belongs to the class-I pyridine nucleotide-disulfide oxidoreductase family. As to quaternary structure, homodimer. Part of the multimeric pyruvate dehydrogenase complex that contains multiple copies of pyruvate dehydrogenase (subunits PDHA (PDHA1 or PDHA2) and PDHB, E1), dihydrolipoamide acetyltransferase (DLAT, E2) and lipoamide dehydrogenase (DLD, E3). These subunits are bound to an inner core composed of about 48 DLAT and 12 PDHX molecules (by non covalent bonds). The 2-oxoglutarate dehydrogenase complex is composed of OGDH (2-oxoglutarate dehydrogenase; E1), DLST (dihydrolipoamide succinyltransferase; E2), DLD (dihydrolipoamide dehydrogenase; E3) and the assembly factor KGD4. It contains multiple copies of the three enzymatic components (E1, E2 and E3). In the nucleus, the 2-oxoglutarate dehydrogenase complex associates with KAT2A. Interacts with PDHX. FAD is required as a cofactor. Post-translationally, tyrosine phosphorylated.

Its subcellular location is the mitochondrion matrix. The protein resides in the nucleus. The protein localises to the cell projection. It localises to the cilium. It is found in the flagellum. Its subcellular location is the cytoplasmic vesicle. The protein resides in the secretory vesicle. The protein localises to the acrosome. It catalyses the reaction N(6)-[(R)-dihydrolipoyl]-L-lysyl-[protein] + NAD(+) = N(6)-[(R)-lipoyl]-L-lysyl-[protein] + NADH + H(+). Its function is as follows. Lipoamide dehydrogenase is a component of the glycine cleavage system as well as an E3 component of three alpha-ketoacid dehydrogenase complexes (pyruvate-, alpha-ketoglutarate-, and branched-chain amino acid-dehydrogenase complex). The 2-oxoglutarate dehydrogenase complex is mainly active in the mitochondrion. A fraction of the 2-oxoglutarate dehydrogenase complex also localizes in the nucleus and is required for lysine succinylation of histones: associates with KAT2A on chromatin and provides succinyl-CoA to histone succinyltransferase KAT2A. In monomeric form may have additional moonlighting function as serine protease. Involved in the hyperactivation of spermatazoa during capacitation and in the spermatazoal acrosome reaction. This chain is Dihydrolipoyl dehydrogenase, mitochondrial (DLD), found in Pongo abelii (Sumatran orangutan).